Here is a 197-residue protein sequence, read N- to C-terminus: Inner membrane-spanning protein YciB (197 aa).

The next 5 helical transmembrane spans lie at 22–42, 48–68, 76–96, 121–141, and 144–164; these read IYSA…YHWF, PSMM…TLIF, WKPS…HLIG, AAWV…AYTF, and EIWV…FLIG.

The protein belongs to the YciB family.

It localises to the cell inner membrane. Functionally, plays a role in cell envelope biogenesis, maintenance of cell envelope integrity and membrane homeostasis. The sequence is that of Inner membrane-spanning protein YciB from Magnetococcus marinus (strain ATCC BAA-1437 / JCM 17883 / MC-1).